A 318-amino-acid chain; its full sequence is NADH-ubiquinone oxidoreductase chain 1 (318 aa).

The next 8 helical transmembrane spans lie at phenylalanine 2 to leucine 22, isoleucine 68 to proline 88, leucine 100 to glycine 120, leucine 146 to isoleucine 166, histidine 171 to alanine 191, leucine 222 to phenylalanine 242, glutamate 253 to valine 273, and phenylalanine 293 to glycine 313.

It belongs to the complex I subunit 1 family. Core subunit of respiratory chain NADH dehydrogenase (Complex I) which is composed of 45 different subunits.

It is found in the mitochondrion inner membrane. The enzyme catalyses a ubiquinone + NADH + 5 H(+)(in) = a ubiquinol + NAD(+) + 4 H(+)(out). Core subunit of the mitochondrial membrane respiratory chain NADH dehydrogenase (Complex I) which catalyzes electron transfer from NADH through the respiratory chain, using ubiquinone as an electron acceptor. Essential for the catalytic activity and assembly of complex I. This chain is NADH-ubiquinone oxidoreductase chain 1 (MT-ND1), found in Hipposideros diadema (Diadem leaf-nosed bat).